A 549-amino-acid chain; its full sequence is Probable acyl-activating enzyme 10 (549 aa).

Belongs to the ATP-dependent AMP-binding enzyme family. As to expression, expressed at low levels in roots.

In terms of biological role, may act as an acid--thiol ligase that activates carboxylic acids by forming acyl-CoAs. The sequence is that of Probable acyl-activating enzyme 10 (AEE10) from Arabidopsis thaliana (Mouse-ear cress).